We begin with the raw amino-acid sequence, 435 residues long: Serine--tRNA ligase (435 aa).

The tract at residues Q41 to A70 is disordered. Residues A49–I58 show a composition bias toward polar residues. T242–E244 contacts L-serine. Residue R273–E275 coordinates ATP. E296 is an L-serine binding site. An ATP-binding site is contributed by E360 to S363. Residue S396 coordinates L-serine.

It belongs to the class-II aminoacyl-tRNA synthetase family. Type-1 seryl-tRNA synthetase subfamily. In terms of assembly, homodimer. The tRNA molecule binds across the dimer.

The protein resides in the cytoplasm. The catalysed reaction is tRNA(Ser) + L-serine + ATP = L-seryl-tRNA(Ser) + AMP + diphosphate + H(+). It carries out the reaction tRNA(Sec) + L-serine + ATP = L-seryl-tRNA(Sec) + AMP + diphosphate + H(+). Its pathway is aminoacyl-tRNA biosynthesis; selenocysteinyl-tRNA(Sec) biosynthesis; L-seryl-tRNA(Sec) from L-serine and tRNA(Sec): step 1/1. Catalyzes the attachment of serine to tRNA(Ser). Is also able to aminoacylate tRNA(Sec) with serine, to form the misacylated tRNA L-seryl-tRNA(Sec), which will be further converted into selenocysteinyl-tRNA(Sec). In Aliivibrio fischeri (strain ATCC 700601 / ES114) (Vibrio fischeri), this protein is Serine--tRNA ligase.